The sequence spans 66 residues: Large ribosomal subunit protein uL29 (66 aa).

It belongs to the universal ribosomal protein uL29 family.

The protein is Large ribosomal subunit protein uL29 of Agrobacterium fabrum (strain C58 / ATCC 33970) (Agrobacterium tumefaciens (strain C58)).